Here is a 106-residue protein sequence, read N- to C-terminus: Gas vesicle protein J (106 aa).

This sequence belongs to the gas vesicle GvpA family.

Its subcellular location is the gas vesicle. A minor component of the gas vesicle, might be involved in nucleating gas vesicle formation. Gas vesicles are hollow, gas filled proteinaceous nanostructures found in some microorganisms. It is not clear what function gas vesicles perform in soil bacteria. The protein is Gas vesicle protein J of Streptomyces sp. (strain CB03234).